A 130-amino-acid polypeptide reads, in one-letter code: DNA-directed RNA polymerase subunit omega (130 aa).

The tract at residues 109-130 (EEELLKGLEGLAPPEEQPEEDE) is disordered.

This sequence belongs to the RNA polymerase subunit omega family. In terms of assembly, the RNAP catalytic core consists of 2 alpha, 1 beta, 1 beta' and 1 omega subunit. When a sigma factor is associated with the core the holoenzyme is formed, which can initiate transcription.

It carries out the reaction RNA(n) + a ribonucleoside 5'-triphosphate = RNA(n+1) + diphosphate. Its function is as follows. Promotes RNA polymerase assembly. Latches the N- and C-terminal regions of the beta' subunit thereby facilitating its interaction with the beta and alpha subunits. The protein is DNA-directed RNA polymerase subunit omega of Rhodopseudomonas palustris (strain BisA53).